Consider the following 150-residue polypeptide: Arginine repressor (150 aa).

Belongs to the ArgR family.

It localises to the cytoplasm. It participates in amino-acid biosynthesis; L-arginine biosynthesis [regulation]. Functionally, regulates arginine biosynthesis genes. This chain is Arginine repressor, found in Clostridium kluyveri (strain NBRC 12016).